The following is a 699-amino-acid chain: Bifunctional protein GAL10 (699 aa).

Residues 1 to 357 (MTAQLQSEST…TTENPFGYQL (357 aa)) form a galactowaldenase region. 13 to 44 (IVLVTGGAGYIGSHTVVELIENGYDCVVADNL) contacts NAD(+). The mutarotase stretch occupies residues 358–699 (RGVEARFSAE…YGSKIVYRFS (342 aa)). The active-site For mutarotase activity is histidine 537. Serine 562 is subject to Phosphoserine.

It in the N-terminal section; belongs to the NAD(P)-dependent epimerase/dehydratase family. The protein in the C-terminal section; belongs to the aldose epimerase family. The cofactor is NAD(+).

The catalysed reaction is UDP-alpha-D-glucose = UDP-alpha-D-galactose. It carries out the reaction alpha-D-glucose = beta-D-glucose. It functions in the pathway carbohydrate metabolism; galactose metabolism. It participates in carbohydrate metabolism; hexose metabolism. In terms of biological role, mutarotase converts alpha-aldose to the beta-anomer. It is active on D-glucose, L-arabinose, D-xylose, D-galactose, maltose and lactose. The protein is Bifunctional protein GAL10 (GAL10) of Saccharomyces cerevisiae (strain ATCC 204508 / S288c) (Baker's yeast).